Here is a 440-residue protein sequence, read N- to C-terminus: MKMAGWKKKLCPGHHLWALGCYMLLAVVSLRLSLRFKCDVDSLDLESRDFQSQHCRDMLYNSLKLPAKRSINCSGITRGDQEAVVQALLDNLEVKKKRPPLTDTYYLNITRDCERFKAQRKFIQFPLSKEELDFPIAYSMVVHEKIENFERLLRAVYAPQNIYCVHVDVKSPETFKEAVKAIISCFPNVFMASKLVPVVYASWSRVQADLNCMEDLLQSSVSWKYLLNTCGTDFPIKTNAEMVLALKMLKGKNSMESEVPSESKKNRWKYRYEVTDTLYPTSKMKDPPPDNLPMFTGNAYFVASRAFVQHVLDNPKSQILVEWVKDTYSPDEHLWATLQRAPWMPGSVPSHPKYHISDMTAIARLVKWQYHEGDVSMGAPYAPCSGIHRRAICIYGAGDLYWILQNHHLLANKFDPRVDDNVLQCLEEYLRHKAIYGTEL.

The Cytoplasmic portion of the chain corresponds to 1-9 (MKMAGWKKK). The chain crosses the membrane as a helical; Signal-anchor for type II membrane protein span at residues 10–30 (LCPGHHLWALGCYMLLAVVSL). Residues 31 to 440 (RLSLRFKCDV…RHKAIYGTEL (410 aa)) are Lumenal-facing. N-linked (GlcNAc...) asparagine; by host glycans are attached at residues asparagine 72 and asparagine 108. 4 disulfide bridges follow: cysteine 73-cysteine 230, cysteine 164-cysteine 384, cysteine 185-cysteine 212, and cysteine 393-cysteine 425.

This sequence belongs to the glycosyltransferase 14 family.

It is found in the host Golgi apparatus membrane. The catalysed reaction is a 3-O-[beta-D-galactosyl-(1-&gt;3)-N-acetyl-alpha-D-galactosaminyl]-L-seryl-[protein] + UDP-N-acetyl-alpha-D-glucosamine = 3-O-{beta-D-galactosyl-(1-&gt;3)-[N-acetyl-beta-D-glucosaminyl-(1-&gt;6)]-N-acetyl-alpha-D-galactosaminyl}-L-seryl-[protein] + UDP + H(+). It carries out the reaction a 3-O-[beta-D-galactosyl-(1-&gt;3)-N-acetyl-alpha-D-galactosaminyl]-L-threonyl-[protein] + UDP-N-acetyl-alpha-D-glucosamine = a 3-O-{beta-D-galactosyl-(1-&gt;3)-[N-acetyl-beta-D-glucosaminyl-(1-&gt;6)]-N-acetyl-alpha-D-galactosaminyl}-L-threonyl-[protein] + UDP + H(+). The enzyme catalyses a beta-D-Gal-(1-&gt;4)-beta-D-GlcNAc-(1-&gt;3)-beta-D-Gal-(1-&gt;4)-beta-D-GlcNAc derivative + UDP-N-acetyl-alpha-D-glucosamine = a beta-D-Gal-(1-&gt;4)-beta-D-GlcNAc-(1-&gt;3)-[beta-D-GlcNAc-(1-&gt;6)]-beta-D-Gal-(1-&gt;4)-N-acetyl-beta-D-glucosaminyl derivative + UDP + H(+). It catalyses the reaction 3-O-[N-acetyl-beta-D-glucosaminyl-(1-&gt;3)-N-acetyl-alpha-D-galactosaminyl]-L-seryl-[protein] + UDP-N-acetyl-alpha-D-glucosamine = 3-O-[N-acetyl-beta-D-glucosaminyl-(1-&gt;3)-[N-acetyl-beta-D-glucosaminyl-(1-&gt;6)]-N-acetyl-alpha-D-galactosaminyl]-L-seryl-[protein] + UDP + H(+). The catalysed reaction is a 3-O-[N-acetyl-beta-D-glucosaminyl-(1-&gt;3)-N-acetyl-alpha-D-galactosaminyl]-L-threonyl-[protein] + UDP-N-acetyl-alpha-D-glucosamine = 3-O-[N-acetyl-beta-D-glucosaminyl-(1-&gt;3)-[N-acetyl-beta-D-glucosaminyl-(1-&gt;6)]-N-acetyl-alpha-D-galactosaminyl]-L-threonyl-[protein] + UDP + H(+). The protein operates within protein modification; protein glycosylation. Functionally, non-essential glycosyltransferase that can synthesize all known mucin beta 6 N-acetylglucosaminides. Mediates core 2 and core 4 O-glycan branching, 2 important steps in mucin-type biosynthesis. Has also I-branching enzyme activity by converting linear into branched poly-N-acetyllactosaminoglycans. Contributes to the post-translational modifications of structural proteins. This chain is Beta-1,3-galactosyl-O-glycosyl-glycoprotein beta-1,6-N-acetylglucosaminyltransferase (Bo17), found in Bovine herpesvirus 4 (strain LVR140) (BoHV-4).